The primary structure comprises 617 residues: Protelomerase (617 aa).

The DNA site is built by arginine 270, lysine 295, arginine 376, and histidine 409. Tyrosine 418 (nucleophile) is an active-site residue. The span at 535–562 (DAEEDEIEEDFTDEEIDDTEFDVSDNAS) shows a compositional bias: acidic residues. Residues 535 to 575 (DAEEDEIEEDFTDEEIDDTEFDVSDNASDEDKPEDKPRFAA) form a disordered region. The segment covering 563-575 (DEDKPEDKPRFAA) has biased composition (basic and acidic residues).

The protein belongs to the Caudoviricetes Protelomerase family. As to quaternary structure, monomer. Homodimer; in presence of DNA.

Functionally, converts the circular intermediates produced by the viral replication and carrying a joined telomere site to a linear DNA molecule with covalently closed hairpin ends. The viral circular DNA is cleaved at a palindromic site called telRL thereby generating a linear prophage plasmid with telomeres. Binds covalently to the 3'-phosphoryl of the cleaved strands. The chain is Protelomerase (tel) from Yersinia enterocolitica (Bacteriophage PY54).